The chain runs to 932 residues: Serotype-specific antigen 1 (932 aa).

An N-terminal signal peptide occupies residues 1 to 24; it reads MYKIKHSFNKTLIAISISSFLSIA. One can recognise a Peptidase S8 domain in the interval 25–407; that stretch reads YATESIENPQ…WGLINLKKAV (383 aa). Residues Asp58, His116, and Ser351 each act as charge relay system in the active site. In terms of domain architecture, Autotransporter spans 669-932; it reads HTPLQTTVWA…PIWLESKCWL (264 aa).

Belongs to the peptidase S8 family.

The protein localises to the cell outer membrane. This Mannheimia haemolytica (Pasteurella haemolytica) protein is Serotype-specific antigen 1 (ssa1).